A 914-amino-acid chain; its full sequence is TRPM8 channel-associated factor 2 (914 aa).

In terms of domain architecture, Peptidase M60 spans 541–840 (DAWMSTGLNL…TYLQLQEAFG (300 aa)).

Belongs to the TCAF family. Interacts with TRPM8 (via N-terminus and C-terminus domains); the interaction inhibits TRPM8 channel activity. Interacts with TRPV6.

The protein localises to the cell membrane. Its function is as follows. Negatively regulates the plasma membrane cation channel TRPM8 activity. Involved in the recruitment of TRPM8 to the cell surface. Promotes prostate cancer cell migration stimulation in a TRPM8-dependent manner. The sequence is that of TRPM8 channel-associated factor 2 from Bos taurus (Bovine).